The primary structure comprises 866 residues: N-alpha-acetyltransferase 15, NatA auxiliary subunit (866 aa).

4 TPR repeats span residues 46–79 (GETLAMKGLTLNCLGKKEEAYELVRRGLRNDLKS), 80–113 (HVCWHVYGLLQRSDKKYDEAIKCYRNALKWDKDN), 148–184 (RASWIGYAIAYHLLEDYEMAAKILEEFRKTQQTSPDK), and 224–257 (LAVEETKGELLLQLCRLEDAADVYRGLQERNPEN). At K262 the chain carries N6-acetyllysine. At S302 the chain carries Phosphoserine. 3 TPR repeats span residues 374-407 (LWVQYYLAQHYDKIGQPSIALEYINTAIESTPTL), 409-441 (ELFLVKAKIYKHAGNIKEAARWMDEAQALDTAD), and 485-518 (MWFQTECAQAYKAMNKFGEALKKCHEIERHFIEI). The interaction with HYPK stretch occupies residues 500–866 (KFGEALKKCH…AEAEELANEI (367 aa)). A phosphoserine mark is found at S537 and S588. Basic and acidic residues predominate over residues 579-594 (EHEADTANMSDKELKK). Residues 579 to 642 (EHEADTANMS…EEIGGPKEEL (64 aa)) are disordered. Basic residues predominate over residues 595–604 (LRNKQRRAQK). Over residues 606-621 (AQIEEEKKNAEKEKQQ) the composition is skewed to basic and acidic residues. Positions 612–629 (KKNAEKEKQQRNQKKKKD) match the Bipartite nuclear localization signal motif. Residues 672–705 (IETHLFAFEIYFRKEKFLLMLQSVKRAFAIDSSH) form a TPR 8 repeat. An N6-acetyllysine mark is found at K735 and K756. 2 positions are modified to phosphoserine: S855 and S856.

As to quaternary structure, component of the N-terminal acetyltransferase A complex (also called the NatA complex) composed of NAA10 and NAA15. Within the complex interacts with NAA10. Component of the N-terminal acetyltransferase A (NatA)/HYPK complex at least composed of NAA10, NAA15 and HYPK, which has N-terminal acetyltransferase activity. In complex with NAA10, interacts with HYPK. Component of the N-terminal acetyltransferase E (NatE) complex at least composed of NAA10, NAA15 and NAA50. Within the complex interacts with NAA10; the interaction is required for binding to NAA50. Interacts with NAAT50. The interaction of the NatA complex with NAA50 reduces the acetylation activity of the NatA complex. Component of the N-terminal acetyltransferase E (NatE)/HYPK complex at least composed of NAA10, NAA15, NAA50 and HYPK. In complex with NAA10 interacts with HYPK; the interaction with HYPK reduces the capacity of the NatA complex to interact with NAA50. Interacts with NAA11. Interacts with XRCC6 and XRCC5. Post-translationally, cleaved by caspases during apoptosis, resulting in a stable 35 kDa fragment. As to expression, expressed at high levels in testis and in ocular endothelial cells. Also found in brain (corpus callosum), heart, colon, bone marrow and at lower levels in most adult tissues, including thyroid, liver, pancreas, mammary and salivary glands, lung, ovary, urogenital system and upper gastrointestinal tract. Overexpressed in gastric cancer, in papillary thyroid carcinomas and in a Burkitt lymphoma cell line (Daudi). Specifically suppressed in abnormal proliferating blood vessels in eyes of patients with proliferative diabetic retinopathy.

Its subcellular location is the cytoplasm. It is found in the nucleus. Auxillary subunit of N-terminal acetyltransferase complexes which display alpha (N-terminal) acetyltransferase (NAT) activity. The NAT activity may be important for vascular, hematopoietic and neuronal growth and development. Required to control retinal neovascularization in adult ocular endothelial cells. In complex with XRCC6 and XRCC5 (Ku80), up-regulates transcription from the osteocalcin promoter. This chain is N-alpha-acetyltransferase 15, NatA auxiliary subunit (NAA15), found in Homo sapiens (Human).